The primary structure comprises 571 residues: RNA polymerase sigma factor SigA (571 aa).

The sigma-70 factor domain-2 stretch occupies residues 321 to 391; the sequence is MVESNLRLVI…TRAIADQART (71 aa). The Interaction with polymerase core subunit RpoC motif lies at 345–348; that stretch reads DLIQ. The interval 400–476 is sigma-70 factor domain-3; that stretch reads ETINKVLRGA…DTAVESPAEA (77 aa). The sigma-70 factor domain-4 stretch occupies residues 489 to 542; it reads VLKTLTDRERFVLIHRFGLLDGRPKTLEEVGSAFNVTRERIRQIEAKALRKMRH. The segment at residues 515-534 is a DNA-binding region (H-T-H motif); the sequence is LEEVGSAFNVTRERIRQIEA.

Belongs to the sigma-70 factor family. RpoD/SigA subfamily. As to quaternary structure, interacts transiently with the RNA polymerase catalytic core.

It localises to the cytoplasm. Sigma factors are initiation factors that promote the attachment of RNA polymerase to specific initiation sites and are then released. This sigma factor is the primary sigma factor during exponential growth. The protein is RNA polymerase sigma factor SigA of Chlamydia trachomatis serovar D (strain ATCC VR-885 / DSM 19411 / UW-3/Cx).